We begin with the raw amino-acid sequence, 776 residues long: Meiotic expression up-regulated protein 1/2 (776 aa).

Coiled coils occupy residues tyrosine 87–glutamate 122, phenylalanine 173–glutamate 227, tyrosine 265–glutamate 307, lysine 362–serine 430, and isoleucine 496–leucine 595.

This Schizosaccharomyces pombe (strain 972 / ATCC 24843) (Fission yeast) protein is Meiotic expression up-regulated protein 1/2 (meu1).